Consider the following 176-residue polypeptide: MDLPGPIHDFLLVFLGSGLILGSLGVVLLTNPIYSAFSLGLVLVCISLFYILSNSHFVAAAQLLIYVGAINILILFAVMFMNGSEYYKDLNLWTVGDGITSLVCTSILVSLMTTILDTSWYGIIWTTKSNQIIEQDLIGNSQQIGIHLSTDFFLPFELISIILLVALIGAIAVARQ.

Transmembrane regions (helical) follow at residues F10 to T30, P32 to L52, A61 to M81, L92 to M112, and F152 to A172.

The protein belongs to the complex I subunit 6 family. NDH is composed of at least 16 different subunits, 5 of which are encoded in the nucleus.

The protein localises to the plastid. Its subcellular location is the chloroplast thylakoid membrane. The enzyme catalyses a plastoquinone + NADH + (n+1) H(+)(in) = a plastoquinol + NAD(+) + n H(+)(out). It catalyses the reaction a plastoquinone + NADPH + (n+1) H(+)(in) = a plastoquinol + NADP(+) + n H(+)(out). NDH shuttles electrons from NAD(P)H:plastoquinone, via FMN and iron-sulfur (Fe-S) centers, to quinones in the photosynthetic chain and possibly in a chloroplast respiratory chain. The immediate electron acceptor for the enzyme in this species is believed to be plastoquinone. Couples the redox reaction to proton translocation, and thus conserves the redox energy in a proton gradient. This Eucalyptus globulus subsp. globulus (Tasmanian blue gum) protein is NAD(P)H-quinone oxidoreductase subunit 6, chloroplastic (ndhG).